The chain runs to 578 residues: Proline--tRNA ligase (578 aa).

Belongs to the class-II aminoacyl-tRNA synthetase family. ProS type 1 subfamily. Homodimer.

Its subcellular location is the cytoplasm. It carries out the reaction tRNA(Pro) + L-proline + ATP = L-prolyl-tRNA(Pro) + AMP + diphosphate. Its function is as follows. Catalyzes the attachment of proline to tRNA(Pro) in a two-step reaction: proline is first activated by ATP to form Pro-AMP and then transferred to the acceptor end of tRNA(Pro). As ProRS can inadvertently accommodate and process non-cognate amino acids such as alanine and cysteine, to avoid such errors it has two additional distinct editing activities against alanine. One activity is designated as 'pretransfer' editing and involves the tRNA(Pro)-independent hydrolysis of activated Ala-AMP. The other activity is designated 'posttransfer' editing and involves deacylation of mischarged Ala-tRNA(Pro). The misacylated Cys-tRNA(Pro) is not edited by ProRS. The protein is Proline--tRNA ligase of Burkholderia pseudomallei (strain 668).